A 255-amino-acid polypeptide reads, in one-letter code: Indole-3-glycerol phosphate synthase (255 aa).

The protein belongs to the TrpC family.

The catalysed reaction is 1-(2-carboxyphenylamino)-1-deoxy-D-ribulose 5-phosphate + H(+) = (1S,2R)-1-C-(indol-3-yl)glycerol 3-phosphate + CO2 + H2O. It functions in the pathway amino-acid biosynthesis; L-tryptophan biosynthesis; L-tryptophan from chorismate: step 4/5. In Streptococcus pneumoniae serotype 2 (strain D39 / NCTC 7466), this protein is Indole-3-glycerol phosphate synthase.